The primary structure comprises 364 residues: Phosphoserine aminotransferase (364 aa).

Position 46 (R46) interacts with L-glutamate. Residues 80 to 81, W106, T157, D176, and Q199 contribute to the pyridoxal 5'-phosphate site; that span reads AR. The residue at position 200 (K200) is an N6-(pyridoxal phosphate)lysine. 241–242 is a binding site for pyridoxal 5'-phosphate; it reads NT.

Belongs to the class-V pyridoxal-phosphate-dependent aminotransferase family. SerC subfamily. In terms of assembly, homodimer. Requires pyridoxal 5'-phosphate as cofactor.

The protein resides in the cytoplasm. It catalyses the reaction O-phospho-L-serine + 2-oxoglutarate = 3-phosphooxypyruvate + L-glutamate. The enzyme catalyses 4-(phosphooxy)-L-threonine + 2-oxoglutarate = (R)-3-hydroxy-2-oxo-4-phosphooxybutanoate + L-glutamate. It functions in the pathway amino-acid biosynthesis; L-serine biosynthesis; L-serine from 3-phospho-D-glycerate: step 2/3. Its pathway is cofactor biosynthesis; pyridoxine 5'-phosphate biosynthesis; pyridoxine 5'-phosphate from D-erythrose 4-phosphate: step 3/5. Catalyzes the reversible conversion of 3-phosphohydroxypyruvate to phosphoserine and of 3-hydroxy-2-oxo-4-phosphonooxybutanoate to phosphohydroxythreonine. The polypeptide is Phosphoserine aminotransferase (Vibrio cholerae serotype O1 (strain ATCC 39315 / El Tor Inaba N16961)).